Consider the following 61-residue polypeptide: Protein translocase subunit SecE (61 aa).

A helical transmembrane segment spans residues 38–58 (GIGMILIGTIGMIIRIIGYLV).

This sequence belongs to the SecE/SEC61-gamma family. In terms of assembly, component of the Sec protein translocase complex. Heterotrimer consisting of SecY (alpha), SecG (beta) and SecE (gamma) subunits. The heterotrimers can form oligomers, although 1 heterotrimer is thought to be able to translocate proteins. Interacts with the ribosome. May interact with SecDF, and other proteins may be involved.

It localises to the cell membrane. Functionally, essential subunit of the Sec protein translocation channel SecYEG. Clamps together the 2 halves of SecY. May contact the channel plug during translocation. In Thermococcus kodakarensis (strain ATCC BAA-918 / JCM 12380 / KOD1) (Pyrococcus kodakaraensis (strain KOD1)), this protein is Protein translocase subunit SecE.